We begin with the raw amino-acid sequence, 209 residues long: Orotate phosphoribosyltransferase (209 aa).

5-phospho-alpha-D-ribose 1-diphosphate contacts are provided by residues Arg-96, Lys-100, His-102, and 122-130 (EDLISTGGS). Ser-126 provides a ligand contact to orotate.

This sequence belongs to the purine/pyrimidine phosphoribosyltransferase family. PyrE subfamily. Homodimer. It depends on Mg(2+) as a cofactor.

The enzyme catalyses orotidine 5'-phosphate + diphosphate = orotate + 5-phospho-alpha-D-ribose 1-diphosphate. It functions in the pathway pyrimidine metabolism; UMP biosynthesis via de novo pathway; UMP from orotate: step 1/2. Functionally, catalyzes the transfer of a ribosyl phosphate group from 5-phosphoribose 1-diphosphate to orotate, leading to the formation of orotidine monophosphate (OMP). This chain is Orotate phosphoribosyltransferase, found in Cytophaga hutchinsonii (strain ATCC 33406 / DSM 1761 / CIP 103989 / NBRC 15051 / NCIMB 9469 / D465).